The sequence spans 160 residues: SsrA-binding protein (160 aa).

The protein belongs to the SmpB family.

The protein resides in the cytoplasm. Its function is as follows. Required for rescue of stalled ribosomes mediated by trans-translation. Binds to transfer-messenger RNA (tmRNA), required for stable association of tmRNA with ribosomes. tmRNA and SmpB together mimic tRNA shape, replacing the anticodon stem-loop with SmpB. tmRNA is encoded by the ssrA gene; the 2 termini fold to resemble tRNA(Ala) and it encodes a 'tag peptide', a short internal open reading frame. During trans-translation Ala-aminoacylated tmRNA acts like a tRNA, entering the A-site of stalled ribosomes, displacing the stalled mRNA. The ribosome then switches to translate the ORF on the tmRNA; the nascent peptide is terminated with the 'tag peptide' encoded by the tmRNA and targeted for degradation. The ribosome is freed to recommence translation, which seems to be the essential function of trans-translation. The polypeptide is SsrA-binding protein (Pectobacterium carotovorum subsp. carotovorum (strain PC1)).